Here is a 497-residue protein sequence, read N- to C-terminus: O-acetyltransferase PaAT-1 (497 aa).

Asn-35 carries an N-linked (GlcNAc...) asparagine glycan. Transmembrane regions (helical) follow at residues 69 to 89 (GISA…GWHI), 107 to 127 (LLIS…YSLS), 157 to 177 (LFVP…LNWY), 241 to 261 (LWTL…LMAF), 278 to 298 (VLFQ…GMLI), 329 to 349 (AIGV…HLAF), 375 to 395 (PIAA…QVLF), 406 to 426 (ISFA…HALG), and 443 to 463 (VAIS…ADFV).

This sequence belongs to the acyltransferase 3 family.

The protein resides in the membrane. Its pathway is mycotoxin biosynthesis. Functionally, O-acetyltransferase; part of the 2 gene clusters that mediate the biosynthesis of fusicoccins, diterpene glucosides that display phytohormone-like activity and function as potent activators of plasma membrane H(+)-ATPases in plants by modifying 14-3-3 proteins and cause the plant disease constriction canker. The first step in the pathway is performed by the fusicoccadiene synthase PaFS that possesses both prenyl transferase and terpene cyclase activity, converting isopentenyl diphosphate and dimethylallyl diphosphate into geranylgeranyl diphosphate (GGDP) and successively converting GGDP into fusicocca-2,10(14)-diene, a precursor for fusicoccin H. The second step is the oxidation at the C-8 position by the cytochrome P450 monooxygenase PaP450-2 to yield fusicocca-2,10(14)-diene-8-beta-ol. The cytochrome P450 monooxygenase PaP450-1 then catalyzes the hydroxylation at the C-16 position to produce fusicocca-2,10(14)-diene-8-beta,16-diol. The dioxygenase fc-dox then catalyzes the 16-oxydation of fusicocca-2,10(14)-diene-8-beta,16-diol to yield an aldehyde (8-beta-hydroxyfusicocca-1,10(14)-dien-16-al). The short-chain dehydrogenase/reductase fc-sdr catalyzes the reduction of the aldehyde to yield fusicocca-1,10(14)-diene-8-beta,16-diol. The next step is the hydroxylation at C-9 performed by the cytochrome P450 monooxygenase PaP450-3 that leads to fusicoccin H aglycon which is glycosylated to fusicoccin H by the O-glycosyltransferase PaGT. Hydroxylation at C-12 by the cytochrome P450 monooxygenase PaP450-4 leads then to the production of fusicoccin Q and is followed by methylation by the O-methyltransferase PaMT to yield fusicoccin P. Fusicoccin P is further converted to fusicoccin J via prenylation by the O-glucose prenyltransferase PaPT. Cytochrome P450 monooxygenase PaP450-5 then performs hydroxylation at C-19 to yield dideacetyl-fusicoccin A which is acetylated to 3'-O-deacetyl-fusicoccin A by the O-acetyltransferase PaAT-2. Finally, a another acetylation by the O-acetyltransferase PaAT-1 yields fusicoccin A. This Phomopsis amygdali (Fusicoccum amygdali) protein is O-acetyltransferase PaAT-1.